The chain runs to 494 residues: Glycogen synthase (494 aa).

K15 lines the ADP-alpha-D-glucose pocket.

It belongs to the glycosyltransferase 1 family. Bacterial/plant glycogen synthase subfamily.

The enzyme catalyses [(1-&gt;4)-alpha-D-glucosyl](n) + ADP-alpha-D-glucose = [(1-&gt;4)-alpha-D-glucosyl](n+1) + ADP + H(+). It functions in the pathway glycan biosynthesis; glycogen biosynthesis. Synthesizes alpha-1,4-glucan chains using ADP-glucose. The chain is Glycogen synthase from Paramagnetospirillum magneticum (strain ATCC 700264 / AMB-1) (Magnetospirillum magneticum).